The primary structure comprises 227 residues: Probable septum site-determining protein MinC (227 aa).

It belongs to the MinC family. As to quaternary structure, interacts with MinD and FtsZ.

Functionally, cell division inhibitor that blocks the formation of polar Z ring septums. Rapidly oscillates between the poles of the cell to destabilize FtsZ filaments that have formed before they mature into polar Z rings. Prevents FtsZ polymerization. This chain is Probable septum site-determining protein MinC, found in Clostridioides difficile (strain 630) (Peptoclostridium difficile).